A 305-amino-acid chain; its full sequence is uncharacterized protein (305 aa).

The next 10 helical transmembrane spans lie at 11 to 31, 37 to 57, 70 to 90, 97 to 117, 126 to 146, 148 to 168, 180 to 200, 217 to 237, 244 to 264, and 265 to 285; these read LLLAFLVIMWGVNWPLSKAAL, LLFAGIRTLIGGLLLVIVALP, IYLVSALLNITLFYGLQTIGL, LFSAIVFFQPVLMGVFSWLWL, VIGLILGFAGVAVISAAGFGG, ISVIGVLLALGSAVSWALGTV, IWMVALQLTIGSVFLLISGFW, LLFISVFVIALGWLVFFTLVG, VASYTFLIPLISIVASSIFLH, and EPLTLSLLAGLLLIVTSICLV. EamA domains lie at 18-141 and 161-287; these read IMWG…VISA and VSWA…LVNT.

Belongs to the EamA transporter family.

Its subcellular location is the cell membrane. This is an uncharacterized protein from Bacillus subtilis (strain 168).